Here is a 790-residue protein sequence, read N- to C-terminus: Penicillin-binding protein 1A (790 aa).

The Cytoplasmic segment spans residues 1-6 (MYKSLL). A helical; Signal-anchor for type II membrane protein transmembrane segment spans residues 7-27 (FCLKIFVFLILVGCGITAYII). Residues 28 to 790 (YHYSRDLPDY…SKEDQSQEIY (763 aa)) lie on the Periplasmic side of the membrane. Residues 49–220 (TRIYSRDGKL…SELNPERNYA (172 aa)) form a transglycosylase region. Glu-87 serves as the catalytic Proton donor; for transglycosylase activity. Positions 398-711 (DVIVVEAIKE…SNVVLPIFID (314 aa)) are transpeptidase. Catalysis depends on Ser-457, which acts as the Acyl-ester intermediate; for transpeptidase activity.

This sequence in the N-terminal section; belongs to the glycosyltransferase 51 family. It in the C-terminal section; belongs to the transpeptidase family.

Its subcellular location is the cell inner membrane. The enzyme catalyses [GlcNAc-(1-&gt;4)-Mur2Ac(oyl-L-Ala-gamma-D-Glu-L-Lys-D-Ala-D-Ala)](n)-di-trans,octa-cis-undecaprenyl diphosphate + beta-D-GlcNAc-(1-&gt;4)-Mur2Ac(oyl-L-Ala-gamma-D-Glu-L-Lys-D-Ala-D-Ala)-di-trans,octa-cis-undecaprenyl diphosphate = [GlcNAc-(1-&gt;4)-Mur2Ac(oyl-L-Ala-gamma-D-Glu-L-Lys-D-Ala-D-Ala)](n+1)-di-trans,octa-cis-undecaprenyl diphosphate + di-trans,octa-cis-undecaprenyl diphosphate + H(+). It catalyses the reaction Preferential cleavage: (Ac)2-L-Lys-D-Ala-|-D-Ala. Also transpeptidation of peptidyl-alanyl moieties that are N-acyl substituents of D-alanine.. The protein operates within cell wall biogenesis; peptidoglycan biosynthesis. Cell wall formation. Synthesis of cross-linked peptidoglycan from the lipid intermediates. The enzyme has a penicillin-insensitive transglycosylase N-terminal domain (formation of linear glycan strands) and a penicillin-sensitive transpeptidase C-terminal domain (cross-linking of the peptide subunits). This Rickettsia conorii (strain ATCC VR-613 / Malish 7) protein is Penicillin-binding protein 1A (mrcA).